Here is a 264-residue protein sequence, read N- to C-terminus: MSDPYMPLTSVRSGAGFEAAKGVHGLTVQIANVYFIQLPSEPHSFVLIDAGMPQSAGVIVNEAKQRFGEGFQLKAIILTHGHFDHIGAIEEILEHWDVPVYIHSREMPYVTGKEDYPPARPDSKSGLVAKLSPLFPRHSIDISSHVQALPEDGSVPFLDEWMWIATPGHTPGHISLFRDDGRVLVAGDAVITVEQEKMADVLIQKQELHGPPAYFTPDTETAAESILKLAGLEPEALLTGHGIPMTGKNFRSDLTELANRLSSI.

Residues His-80, His-82, Asp-84, His-85, His-169, Asp-188, and His-241 each coordinate Zn(2+).

It belongs to the metallo-beta-lactamase superfamily. Requires Zn(2+) as cofactor.

In Bacillus subtilis (strain 168), this protein is Probable metallo-hydrolase YflN (yflN).